The chain runs to 160 residues: Cytochrome b6-f complex subunit 4 (160 aa).

3 helical membrane passes run 36–56 (LLYL…GLAV), 95–115 (LLGV…PFIE), and 131–151 (LVFI…CLPI).

This sequence belongs to the cytochrome b family. PetD subfamily. In terms of assembly, the 4 large subunits of the cytochrome b6-f complex are cytochrome b6, subunit IV (17 kDa polypeptide, petD), cytochrome f and the Rieske protein, while the 4 small subunits are petG, petL, petM and petN. The complex functions as a dimer.

The protein localises to the plastid. It is found in the chloroplast thylakoid membrane. In terms of biological role, component of the cytochrome b6-f complex, which mediates electron transfer between photosystem II (PSII) and photosystem I (PSI), cyclic electron flow around PSI, and state transitions. The sequence is that of Cytochrome b6-f complex subunit 4 from Thalassiosira pseudonana (Marine diatom).